A 162-amino-acid chain; its full sequence is Peptidyl-prolyl cis-trans isomerase-like 1 (162 aa).

A PPIase cyclophilin-type domain is found at 1-155; it reads MATDVAFDTS…DGVKILRARI (155 aa).

This sequence belongs to the cyclophilin-type PPIase family. PPIL1 subfamily.

It carries out the reaction [protein]-peptidylproline (omega=180) = [protein]-peptidylproline (omega=0). Its function is as follows. PPIases accelerate the folding of proteins. It catalyzes the cis-trans isomerization of proline imidic peptide bonds in oligopeptides. The sequence is that of Peptidyl-prolyl cis-trans isomerase-like 1 (cypC) from Aspergillus niger.